A 145-amino-acid polypeptide reads, in one-letter code: Deoxyuridine 5'-triphosphate nucleotidohydrolase (145 aa).

Substrate contacts are provided by residues 62–64 (RSG), asparagine 75, 79–81 (TVD), and lysine 89.

It belongs to the dUTPase family. The cofactor is Mg(2+).

It carries out the reaction dUTP + H2O = dUMP + diphosphate + H(+). It participates in pyrimidine metabolism; dUMP biosynthesis; dUMP from dCTP (dUTP route): step 2/2. In terms of biological role, this enzyme is involved in nucleotide metabolism: it produces dUMP, the immediate precursor of thymidine nucleotides and it decreases the intracellular concentration of dUTP so that uracil cannot be incorporated into DNA. The chain is Deoxyuridine 5'-triphosphate nucleotidohydrolase from Helicobacter pylori (strain ATCC 700392 / 26695) (Campylobacter pylori).